Here is a 445-residue protein sequence, read N- to C-terminus: D-serine transporter DsdX (445 aa).

12 consecutive transmembrane segments (helical) span residues 5 to 25, 29 to 49, 57 to 77, 106 to 126, 140 to 160, 178 to 198, 224 to 244, 265 to 285, 302 to 322, 343 to 363, 385 to 405, and 425 to 445; these read IWVVSTLLISIVLIVLTIVKF, PFLALLLASFFVGTMMGMGPL, SGIGGTLGFLAAVIGLGTILG, VLVGLICGITLFVEVGVVLLI, LLKLAIPLCTALMAVHCVVPP, VIVYGLLVGLMASLIGGPLFL, TLPSLGATLFTVLLPIALMLV, IGNPITATFIAVFVAYYVLGI, FGSIANILLIIGAGGAFNAIL, ILLAWLVALILHAAVGSATVA, IIAIAIGSGAIGCTIVTDSLF, and TATFIASVIALAGTFLLSFII.

This sequence belongs to the GntP permease family.

The protein resides in the cell inner membrane. Its activity is regulated as follows. Uptake of D-serine is inhibited by carbonyl cyanide m-chlorophenylhydrazone (CCCP), and at high concentrations of D-threonine, stimulated by D-cycloserine and not affected by D-alanine or glycine. In terms of biological role, protein that allows transport of D-serine across the inner membrane, does not transport D-alanine nor probably glycine. Is probably a H(+) symporter, as CCCP inhibits transport. Transports D-serine more efficiently than CycA. This Escherichia coli O6:H1 (strain CFT073 / ATCC 700928 / UPEC) protein is D-serine transporter DsdX (dsdX).